We begin with the raw amino-acid sequence, 146 residues long: Large ribosomal subunit protein uL13 (146 aa).

The protein belongs to the universal ribosomal protein uL13 family. In terms of assembly, part of the 50S ribosomal subunit.

Functionally, this protein is one of the early assembly proteins of the 50S ribosomal subunit, although it is not seen to bind rRNA by itself. It is important during the early stages of 50S assembly. This is Large ribosomal subunit protein uL13 from Methylobacillus flagellatus (strain ATCC 51484 / DSM 6875 / VKM B-1610 / KT).